Consider the following 146-residue polypeptide: Hemoglobin subunit beta (146 aa).

An N-acetylvaline modification is found at valine 1. The 145-residue stretch at 2–146 folds into the Globin domain; it reads HLTGEEKSAV…VANALAHKYH (145 aa). The residue at position 12 (threonine 12) is a Phosphothreonine. Phosphoserine is present on serine 44. Lysine 59 carries the N6-acetyllysine modification. Position 63 (histidine 63) interacts with heme b. An N6-acetyllysine modification is found at lysine 82. Histidine 92 lines the heme b pocket. S-nitrosocysteine is present on cysteine 93. Lysine 144 is modified (N6-acetyllysine).

This sequence belongs to the globin family. Heterotetramer of two alpha chains and two beta chains. In terms of tissue distribution, red blood cells.

Functionally, involved in oxygen transport from the lung to the various peripheral tissues. This Nycticebus coucang (Slow loris) protein is Hemoglobin subunit beta (HBB).